The primary structure comprises 337 residues: Homeobox protein knotted-1-like 4 (337 aa).

Disordered regions lie at residues 1–56 (MEQQ…SFHE) and 159–190 (FTLD…GLPE). The segment covering 27–38 (PTSTSTSPAVPS) has biased composition (low complexity). One can recognise an ELK domain in the interval 200 to 220 (ELKSHLLNKYSGYLSSLWREL). Positions 221-284 (SKKKKKGKLP…NQRKRHWKPT (64 aa)) form a DNA-binding region, homeobox; TALE-type.

The protein belongs to the TALE/KNOX homeobox family.

It localises to the nucleus. The polypeptide is Homeobox protein knotted-1-like 4 (OSH10) (Oryza sativa subsp. japonica (Rice)).